The following is a 256-amino-acid chain: Thiazole synthase (256 aa).

Lys95 functions as the Schiff-base intermediate with DXP in the catalytic mechanism. 1-deoxy-D-xylulose 5-phosphate is bound by residues Gly156, 182–183 (AG), and 204–205 (NT).

It belongs to the ThiG family. Homotetramer. Forms heterodimers with either ThiH or ThiS.

The protein resides in the cytoplasm. The catalysed reaction is [ThiS sulfur-carrier protein]-C-terminal-Gly-aminoethanethioate + 2-iminoacetate + 1-deoxy-D-xylulose 5-phosphate = [ThiS sulfur-carrier protein]-C-terminal Gly-Gly + 2-[(2R,5Z)-2-carboxy-4-methylthiazol-5(2H)-ylidene]ethyl phosphate + 2 H2O + H(+). The protein operates within cofactor biosynthesis; thiamine diphosphate biosynthesis. Functionally, catalyzes the rearrangement of 1-deoxy-D-xylulose 5-phosphate (DXP) to produce the thiazole phosphate moiety of thiamine. Sulfur is provided by the thiocarboxylate moiety of the carrier protein ThiS. In vitro, sulfur can be provided by H(2)S. This Idiomarina loihiensis (strain ATCC BAA-735 / DSM 15497 / L2-TR) protein is Thiazole synthase.